Reading from the N-terminus, the 409-residue chain is Arginine deiminase (409 aa).

The Amidino-cysteine intermediate role is filled by cysteine 399.

It belongs to the arginine deiminase family.

Its subcellular location is the cytoplasm. It catalyses the reaction L-arginine + H2O = L-citrulline + NH4(+). Its pathway is amino-acid degradation; L-arginine degradation via ADI pathway; carbamoyl phosphate from L-arginine: step 1/2. The sequence is that of Arginine deiminase from Borrelia duttonii (strain Ly).